Reading from the N-terminus, the 260-residue chain is Snake venom serine protease gussurobin (260 aa).

The N-terminal stretch at 1–18 (MVLIRVLANLLILQLSYA) is a signal peptide. A propeptide spanning residues 19–24 (QKSSEL) is cleaved from the precursor. Positions 25–251 (IIGGDECNIN…YTEWIQSTIA (227 aa)) constitute a Peptidase S1 domain. 6 disulfide bridges follow: C31–C165, C52–C68, C100–C258, C144–C212, C176–C191, and C202–C227. Active-site charge relay system residues include H67 and D112. Residues N123 and N124 are each glycosylated (N-linked (GlcNAc...) asparagine). The Charge relay system role is filled by S206.

This sequence belongs to the peptidase S1 family. Snake venom subfamily. In terms of assembly, monomer. Expressed by the venom gland.

The protein localises to the secreted. In terms of biological role, snake venom serine protease that may act in the hemostasis system of the prey. The protein is Snake venom serine protease gussurobin of Gloydius ussuriensis (Ussuri mamushi).